The following is a 437-amino-acid chain: Transcription factor AP-2-alpha (437 aa).

Residue Lys10 forms a Glycyl lysine isopeptide (Lys-Gly) (interchain with G-Cter in SUMO); alternate linkage. Lys10 is covalently cross-linked (Glycyl lysine isopeptide (Lys-Gly) (interchain with G-Cter in SUMO2); alternate). The tract at residues 14–107 (CEDRHDGASN…GQRQSQESGL (94 aa)) is disordered. Residues 57 to 62 (YFPPPY) carry the PPxY motif motif. 2 stretches are compositionally biased toward low complexity: residues 65–74 (IYPQSQDPYS) and 88–101 (QPQP…GQRQ). Glycyl lysine isopeptide (Lys-Gly) (interchain with G-Cter in SUMO2) cross-links involve residues Lys177 and Lys184. Ser239 is subject to Phosphoserine; by PKA. The tract at residues 280 to 410 (RRKAANVTLL…YLTEALKAMD (131 aa)) is H-S-H (helix-span-helix), dimerization. A compositionally biased stretch (polar residues) spans 414 to 427 (LSNNPNSHTDNNAK). Residues 414–437 (LSNNPNSHTDNNAKSSDKEEKHRK) are disordered. Over residues 428 to 437 (SSDKEEKHRK) the composition is skewed to basic and acidic residues.

This sequence belongs to the AP-2 family. Binds DNA as a dimer. Can form homodimers or heterodimers with other AP-2 family members. Interacts with WWOX. Interacts with CITED4. Interacts with UBE2I. Interacts with RALBP1 in a complex also containing EPN1 and NUMB during interphase and mitosis. Interacts with KCTD1; this interaction represses transcription activation. Interacts (via C-terminus) with CITED2 (via C-terminus); the interaction stimulates TFAP2A-transcriptional activation. Interacts (via N-terminus) with EP300 (via N-terminus); the interaction requires CITED2. Interacts with KCTD15; this interaction inhibits TFAP2A transcriptional activation. Post-translationally, sumoylated on Lys-10; which inhibits transcriptional activity.

The protein resides in the nucleus. In terms of biological role, sequence-specific DNA-binding protein that interacts with inducible viral and cellular enhancer elements to regulate transcription of selected genes. AP-2 factors bind to the consensus sequence 5'-GCCNNNGGC-3' and activate genes involved in a large spectrum of important biological functions including proper eye, face, body wall, limb and neural tube development. They also suppress a number of genes including MCAM/MUC18, C/EBP alpha and MYC. AP-2-alpha is the only AP-2 protein required for early morphogenesis of the lens vesicle. Together with the CITED2 coactivator, stimulates the PITX2 P1 promoter transcription activation. Associates with chromatin to the PITX2 P1 promoter region. The sequence is that of Transcription factor AP-2-alpha (TFAP2A) from Bos taurus (Bovine).